A 707-amino-acid chain; its full sequence is MDFHHKNNYGLYALEILAQYHNISINPEEIKHKFDINGVGLDLTSWLLAAKSLELKVKAVKKTIERLNFIYLPALVWREDGHHFILTKVNKESNRYLIYDLEQRNPRVLEQAEFEDLYQGNIILITSRSSVIGKLAKFDFTWFIPAVIKYRKIFIETLIVSVFLQLFALITPLFFQVVMDKVLVHRGFSTLNIITIALAVVAIFEITLSGLRTYIFTHSTSRIDVELGAKLFRHLLALPISYFESRRVGDTVARVRELDQIRNFLTGQALTSILDLLFSFIFFAVMWYYSPKLTLVILFSLPCYATWSIFISPILRRRLDDKFARNADNQSFLVESVTAINTIKAMAVSPQMTNIWDKQLAGYVAAGFKVTVLATIGQQGIQLIQKAVMIINLWLGAHLVISGDLSIGQLIAFNMLAGQIVAPVIRLAQLWQDFQQVGISVTRLGDVLNYPTESYQGKLTLPEINGDISFRNIRFRYKPDAPIILNNINLNIKQGEIIGIVGRSGSGKSTLTKLIQRFYIPENGQVLIDGHDLALADPNWLRRQVGVVLQDNVLLNRSIIDNIALADPGMPVEKVIHAAKLAGAHDFISELREGYNTIVGEQGAGLSGGQRQRIAIARALVNNPKILIFDEATSALDYESEHVIMRNMHKICQGRTVIIIAHRLSTVKNADRIIVMEKGQIIEQGKHKELLSDPESLYHYLHQLQSD.

Residues 2–125 enclose the Peptidase C39 domain; sequence DFHHKNNYGL…DLYQGNIILI (124 aa). Residue His83 is part of the active site. One can recognise an ABC transmembrane type-1 domain in the interval 154-436; that stretch reads FIETLIVSVF…LAQLWQDFQQ (283 aa). The next 5 membrane-spanning stretches (helical) occupy residues 158-178, 191-211, 269-289, 295-315, and 387-407; these read LIVS…FQVV, LNII…LSGL, ALTS…MWYY, LVIL…SPIL, and AVMI…DLSI. An ABC transporter domain is found at 468–703; sequence ISFRNIRFRY…PESLYHYLHQ (236 aa). ATP is bound at residue 502–509; that stretch reads GRSGSGKS.

This sequence belongs to the ABC transporter superfamily. Protein-1 exporter (TC 3.A.1.109) family.

Its subcellular location is the cell membrane. Involved in the export of hemolysin A. The sequence is that of Alpha-hemolysin translocation ATP-binding protein HlyB (hlyB) from Proteus vulgaris.